The following is a 304-amino-acid chain: Sulfate adenylyltransferase subunit 2 (304 aa).

The protein belongs to the PAPS reductase family. CysD subfamily. As to quaternary structure, heterodimer composed of CysD, the smaller subunit, and CysN.

The enzyme catalyses sulfate + ATP + H(+) = adenosine 5'-phosphosulfate + diphosphate. It participates in sulfur metabolism; hydrogen sulfide biosynthesis; sulfite from sulfate: step 1/3. In terms of biological role, with CysN forms the ATP sulfurylase (ATPS) that catalyzes the adenylation of sulfate producing adenosine 5'-phosphosulfate (APS) and diphosphate, the first enzymatic step in sulfur assimilation pathway. APS synthesis involves the formation of a high-energy phosphoric-sulfuric acid anhydride bond driven by GTP hydrolysis by CysN coupled to ATP hydrolysis by CysD. In Halorhodospira halophila (strain DSM 244 / SL1) (Ectothiorhodospira halophila (strain DSM 244 / SL1)), this protein is Sulfate adenylyltransferase subunit 2.